We begin with the raw amino-acid sequence, 387 residues long: Succinate--CoA ligase [ADP-forming] subunit beta (387 aa).

Positions 9-244 (KQLFAEYGIP…KTQEDETEVL (236 aa)) constitute an ATP-grasp domain. Residues Lys-46, 53 to 55 (GRG), Gly-102, and Glu-107 contribute to the ATP site. Positions 199 and 213 each coordinate Mg(2+). Substrate is bound by residues Asn-264 and 321 to 323 (GIV).

Belongs to the succinate/malate CoA ligase beta subunit family. As to quaternary structure, heterotetramer of two alpha and two beta subunits. The cofactor is Mg(2+).

The catalysed reaction is succinate + ATP + CoA = succinyl-CoA + ADP + phosphate. The enzyme catalyses GTP + succinate + CoA = succinyl-CoA + GDP + phosphate. It functions in the pathway carbohydrate metabolism; tricarboxylic acid cycle; succinate from succinyl-CoA (ligase route): step 1/1. Functionally, succinyl-CoA synthetase functions in the citric acid cycle (TCA), coupling the hydrolysis of succinyl-CoA to the synthesis of either ATP or GTP and thus represents the only step of substrate-level phosphorylation in the TCA. The beta subunit provides nucleotide specificity of the enzyme and binds the substrate succinate, while the binding sites for coenzyme A and phosphate are found in the alpha subunit. This is Succinate--CoA ligase [ADP-forming] subunit beta from Xylella fastidiosa (strain M23).